Here is a 364-residue protein sequence, read N- to C-terminus: Ferrochelatase (364 aa).

Residues histidine 213 and glutamate 294 each contribute to the Fe cation site.

Belongs to the ferrochelatase family.

It is found in the cytoplasm. The enzyme catalyses heme b + 2 H(+) = protoporphyrin IX + Fe(2+). It functions in the pathway porphyrin-containing compound metabolism; protoheme biosynthesis; protoheme from protoporphyrin-IX: step 1/1. Catalyzes the ferrous insertion into protoporphyrin IX. In Chromobacterium violaceum (strain ATCC 12472 / DSM 30191 / JCM 1249 / CCUG 213 / NBRC 12614 / NCIMB 9131 / NCTC 9757 / MK), this protein is Ferrochelatase.